The following is a 360-amino-acid chain: Inward rectifier potassium channel 13 (360 aa).

Residues methionine 1–aspartate 50 lie on the Cytoplasmic side of the membrane. The chain crosses the membrane as a helical span at residues methionine 51 to valine 77. At leucine 78–serine 105 the chain is on the extracellular side. The segment at residues phenylalanine 106–tyrosine 122 is an intramembrane region (helical; Pore-forming). The Selectivity filter motif lies at threonine 119–threonine 124. Topologically, residues glycine 123–cysteine 131 are extracellular. The helical transmembrane segment at proline 132 to valine 157 threads the bilayer. Over alanine 158–glutamate 360 the chain is Cytoplasmic. Serine 201 is subject to Phosphoserine; by PKC. A Phosphoserine; by PKA modification is found at serine 287.

The protein belongs to the inward rectifier-type potassium channel (TC 1.A.2.1) family. KCNJ13 subfamily. As to quaternary structure, homotetramer. Interacts with RAB28; the interaction may facilitate cone outer segments phagocytosis. Phosphorylation at Ser-201 by PKC strongly inhibits ionic currents, while phosphorylation at Ser-287 by PKA increases them. As to expression, predominantly expressed in small intestine. Expression is also detected in stomach, kidney, and all central nervous system regions tested with the exception of spinal cord.

The protein resides in the membrane. Its subcellular location is the cell membrane. The catalysed reaction is K(+)(in) = K(+)(out). Its activity is regulated as follows. Inhibited by Ba(2+) and Cs(+), although sensitivity to those inhibitors is much lower than in other Kir channels. Its function is as follows. Inward rectifier potassium channels are characterized by a greater tendency to allow potassium to flow into the cell rather than out of it. Their voltage dependence is regulated by the concentration of extracellular potassium; as external potassium is raised, the voltage range of the channel opening shifts to more positive voltages. The inward rectification is mainly due to the blockage of outward current by internal magnesium. KCNJ13 has a very low single channel conductance, low sensitivity to block by external barium and cesium, and no dependence of its inward rectification properties on the internal blocking particle magnesium. The protein is Inward rectifier potassium channel 13 (KCNJ13) of Homo sapiens (Human).